We begin with the raw amino-acid sequence, 183 residues long: Microfibrillar-associated protein 2 (183 aa).

The segment at residues 1-16 (MRAACLFLLFMPGLLA) is a signal peptide (or 18). Gln17 bears the Pyrrolidone carboxylic acid mark. Sulfotyrosine is present on residues Tyr46, Tyr47, and Tyr49. The interval 52–92 (VSPRTPEEQFQSQQQVQQEVIPAPTPEPAAAGDLETEPTEP) is disordered. Positions 59–70 (EQFQSQQQVQQE) are enriched in low complexity. In terms of domain architecture, ShKT spans 153 to 183 (CRDKFSKCGVMAVSGLCQSVAASCARSCGGC). 3 disulfides stabilise this stretch: Cys153–Cys183, Cys160–Cys176, and Cys169–Cys180.

It belongs to the MFAP family. In terms of assembly, forms a ternary complex with BGN and ELN. Interacts with FBN1 (via N-terminal domain) and FBN2. In terms of processing, forms intermolecular disulfide bonds either with other MAGP-1 molecules or with other components of the microfibrils. May form transglutaminase cross-links. Post-translationally, O-glycosylated.

The protein resides in the secreted. It localises to the extracellular space. The protein localises to the extracellular matrix. Its function is as follows. Component of the elastin-associated microfibrils. This is Microfibrillar-associated protein 2 (Mfap2) from Mus musculus (Mouse).